Here is a 96-residue protein sequence, read N- to C-terminus: MSDFEIIVGISSLLQVIILNIQNMLEVLLEYIGIHKRRVDISTYYDNVYFFFHFICYHLLSYCIINLRISASFICDSCSLIIMSPSYAVCDNILVT.

A helical transmembrane segment spans residues 1–21; it reads MSDFEIIVGISSLLQVIILNI.

The protein localises to the membrane. This is an uncharacterized protein from Saccharomyces cerevisiae (strain ATCC 204508 / S288c) (Baker's yeast).